A 61-amino-acid polypeptide reads, in one-letter code: MAVPRRKTSPSRRGMRRSADAISKPTYAEDKDSGELRRPHHLDLKTGMYKGRQVLKAKSDS.

Residues 1–16 (MAVPRRKTSPSRRGMR) show a composition bias toward basic residues. The interval 1 to 61 (MAVPRRKTSP…RQVLKAKSDS (61 aa)) is disordered. Residues 27–44 (YAEDKDSGELRRPHHLDL) are compositionally biased toward basic and acidic residues.

Belongs to the bacterial ribosomal protein bL32 family.

This chain is Large ribosomal subunit protein bL32, found in Nitrobacter winogradskyi (strain ATCC 25391 / DSM 10237 / CIP 104748 / NCIMB 11846 / Nb-255).